Consider the following 240-residue polypeptide: Biosynthetic peptidoglycan transglycosylase (240 aa).

A helical membrane pass occupies residues 16 to 36; it reads VLMALLCLFLIYELAMFSMVV.

The protein belongs to the glycosyltransferase 51 family.

The protein localises to the cell inner membrane. It carries out the reaction [GlcNAc-(1-&gt;4)-Mur2Ac(oyl-L-Ala-gamma-D-Glu-L-Lys-D-Ala-D-Ala)](n)-di-trans,octa-cis-undecaprenyl diphosphate + beta-D-GlcNAc-(1-&gt;4)-Mur2Ac(oyl-L-Ala-gamma-D-Glu-L-Lys-D-Ala-D-Ala)-di-trans,octa-cis-undecaprenyl diphosphate = [GlcNAc-(1-&gt;4)-Mur2Ac(oyl-L-Ala-gamma-D-Glu-L-Lys-D-Ala-D-Ala)](n+1)-di-trans,octa-cis-undecaprenyl diphosphate + di-trans,octa-cis-undecaprenyl diphosphate + H(+). Its pathway is cell wall biogenesis; peptidoglycan biosynthesis. Functionally, peptidoglycan polymerase that catalyzes glycan chain elongation from lipid-linked precursors. In Bordetella avium (strain 197N), this protein is Biosynthetic peptidoglycan transglycosylase.